The chain runs to 252 residues: uncharacterized protein (252 aa).

6 helical membrane-spanning segments follow: residues 5 to 25 (LTSL…IVSF), 29 to 49 (LALV…GTFI), 61 to 81 (IAGI…GLYF), 141 to 161 (ILPS…PGII), 179 to 199 (WLLL…SKWW), and 217 to 237 (IGWI…LIQF).

It belongs to the DedA family.

It localises to the cell membrane. This is an uncharacterized protein from Buchnera aphidicola subsp. Schizaphis graminum (strain Sg).